Consider the following 88-residue polypeptide: Small ribosomal subunit protein uS17 (88 aa).

This sequence belongs to the universal ribosomal protein uS17 family. In terms of assembly, part of the 30S ribosomal subunit.

One of the primary rRNA binding proteins, it binds specifically to the 5'-end of 16S ribosomal RNA. The polypeptide is Small ribosomal subunit protein uS17 (Pseudomonas savastanoi pv. phaseolicola (strain 1448A / Race 6) (Pseudomonas syringae pv. phaseolicola (strain 1448A / Race 6))).